The following is a 129-amino-acid chain: Glycine cleavage system H protein (129 aa).

In terms of domain architecture, Lipoyl-binding spans 24–106; it reads SYTVGITEHA…YGEGWFFRVM (83 aa). Residue K65 is modified to N6-lipoyllysine.

It belongs to the GcvH family. The glycine cleavage system is composed of four proteins: P, T, L and H. The cofactor is (R)-lipoate.

The glycine cleavage system catalyzes the degradation of glycine. The H protein shuttles the methylamine group of glycine from the P protein to the T protein. This chain is Glycine cleavage system H protein, found in Shewanella putrefaciens (strain CN-32 / ATCC BAA-453).